Reading from the N-terminus, the 454-residue chain is DNA repair protein RadA (454 aa).

A C4-type zinc finger spans residues 11–28; sequence CTECGTHSPKWLGQCSGC. 94–101 is a binding site for ATP; that stretch reads GEPGIGKS. The RadA KNRFG motif motif lies at 251 to 255; the sequence is KNRFG. Positions 350–454 are lon-protease-like; it reads DVFLSIAGGL…TIKDAVRLLQ (105 aa).

This sequence belongs to the RecA family. RadA subfamily.

In terms of biological role, DNA-dependent ATPase involved in processing of recombination intermediates, plays a role in repairing DNA breaks. Stimulates the branch migration of RecA-mediated strand transfer reactions, allowing the 3' invading strand to extend heteroduplex DNA faster. Binds ssDNA in the presence of ADP but not other nucleotides, has ATPase activity that is stimulated by ssDNA and various branched DNA structures, but inhibited by SSB. Does not have RecA's homology-searching function. In Chlamydia trachomatis serovar D (strain ATCC VR-885 / DSM 19411 / UW-3/Cx), this protein is DNA repair protein RadA.